Consider the following 135-residue polypeptide: MRVIQTAGKRKTAVARATIREGKGRVRINHKPVEIIEPEIARFTIMEPLILAGEEIVSRVDIDVKVEGGGFMGQAEAARVAIARALVEWTNDMNLKEKFMKYDRTMLVGDSRRTEPHKPNRSTKGPRAKRQKSYR.

Over residues Val-108–Lys-118 the composition is skewed to basic and acidic residues. The tract at residues Val-108–Arg-135 is disordered. Positions Pro-119–Arg-135 are enriched in basic residues.

Belongs to the universal ribosomal protein uS9 family. Part of the 30S ribosomal subunit.

In Thermococcus kodakarensis (strain ATCC BAA-918 / JCM 12380 / KOD1) (Pyrococcus kodakaraensis (strain KOD1)), this protein is Small ribosomal subunit protein uS9.